We begin with the raw amino-acid sequence, 391 residues long: Phosphoglycerate kinase (391 aa).

Substrate contacts are provided by residues 21–23 (DLN), arginine 36, 59–62 (HLGR), arginine 113, and arginine 146. ATP is bound by residues lysine 197, glutamate 319, and 345–348 (GGDT).

This sequence belongs to the phosphoglycerate kinase family. As to quaternary structure, monomer.

Its subcellular location is the cytoplasm. The enzyme catalyses (2R)-3-phosphoglycerate + ATP = (2R)-3-phospho-glyceroyl phosphate + ADP. Its pathway is carbohydrate degradation; glycolysis; pyruvate from D-glyceraldehyde 3-phosphate: step 2/5. The protein is Phosphoglycerate kinase of Shewanella denitrificans (strain OS217 / ATCC BAA-1090 / DSM 15013).